Consider the following 273-residue polypeptide: MHDANIRVAIAGAGGRMGRQLIQAALALEGVQLGAALEREGSSLLGSDAGELAGAGKTGVTVQSSLDAVKDDFDVFIDFTRPEGTLNHLAFCRQHGKGMVIGTTGFDEAGKQAIRDAAADIAIVFAANFSVGVNVMLKLLEKAAKVMGDYTDIEIIEAHHRHKVDAPSGTALAMGEAIAHALDKDLKDCAVYSRESHTGERVPGTIGFATVRAGDIVGEHTAMFADIGERLEITHKASSRMTFANGAVRSALWLSGKESGLFDMRDVLDLNSL.

NAD(+)-binding positions include 12–17 and glutamate 38; that span reads GAGGRM. Arginine 39 is an NADP(+) binding site. Residues 102–104 and 126–129 each bind NAD(+); these read GTT and AANF. Histidine 159 functions as the Proton donor/acceptor in the catalytic mechanism. (S)-2,3,4,5-tetrahydrodipicolinate is bound at residue histidine 160. Residue lysine 163 is the Proton donor of the active site. 169–170 is a (S)-2,3,4,5-tetrahydrodipicolinate binding site; that stretch reads GT.

It belongs to the DapB family. Homotetramer.

The protein resides in the cytoplasm. It carries out the reaction (S)-2,3,4,5-tetrahydrodipicolinate + NAD(+) + H2O = (2S,4S)-4-hydroxy-2,3,4,5-tetrahydrodipicolinate + NADH + H(+). The catalysed reaction is (S)-2,3,4,5-tetrahydrodipicolinate + NADP(+) + H2O = (2S,4S)-4-hydroxy-2,3,4,5-tetrahydrodipicolinate + NADPH + H(+). It functions in the pathway amino-acid biosynthesis; L-lysine biosynthesis via DAP pathway; (S)-tetrahydrodipicolinate from L-aspartate: step 4/4. Catalyzes the conversion of 4-hydroxy-tetrahydrodipicolinate (HTPA) to tetrahydrodipicolinate. This is 4-hydroxy-tetrahydrodipicolinate reductase from Shigella boydii serotype 4 (strain Sb227).